The chain runs to 242 residues: DNA repair protein RecO (242 aa).

Belongs to the RecO family.

Its function is as follows. Involved in DNA repair and RecF pathway recombination. The chain is DNA repair protein RecO from Dechloromonas aromatica (strain RCB).